An 89-amino-acid chain; its full sequence is Signal recognition particle 19 kDa protein (89 aa).

The protein belongs to the SRP19 family. In terms of assembly, part of the signal recognition particle protein translocation system, which is composed of SRP and FtsY. Archaeal SRP consists of a 7S RNA molecule of 300 nucleotides and two protein subunits: SRP54 and SRP19.

It is found in the cytoplasm. Involved in targeting and insertion of nascent membrane proteins into the cytoplasmic membrane. Binds directly to 7S RNA and mediates binding of the 54 kDa subunit of the SRP. This chain is Signal recognition particle 19 kDa protein, found in Methanococcus maripaludis (strain DSM 14266 / JCM 13030 / NBRC 101832 / S2 / LL).